Reading from the N-terminus, the 506-residue chain is Chromosomal replication initiator protein DnaA (506 aa).

Positions 1-87 (MSVELWQQCV…IGSRRSSAPR (87 aa)) are domain I, interacts with DnaA modulators. Residues 87-169 (RAAPNAPVSA…QVEGALKHTS (83 aa)) form a domain II region. The interval 135-154 (DSFDAMAEPAAAPPSGGGRA) is disordered. The segment covering 139–148 (AMAEPAAAPP) has biased composition (low complexity). Residues 170 to 386 (YLNRTFTFDT…GALKRVIAHS (217 aa)) form a domain III, AAA+ region region. 4 residues coordinate ATP: glycine 214, glycine 216, lysine 217, and threonine 218. The segment at 387–506 (HFMGRDITIE…YKNLLRTLTT (120 aa)) is domain IV, binds dsDNA.

The protein belongs to the DnaA family. In terms of assembly, oligomerizes as a right-handed, spiral filament on DNA at oriC.

The protein resides in the cytoplasm. Functionally, plays an essential role in the initiation and regulation of chromosomal replication. ATP-DnaA binds to the origin of replication (oriC) to initiate formation of the DNA replication initiation complex once per cell cycle. Binds the DnaA box (a 9 base pair repeat at the origin) and separates the double-stranded (ds)DNA. Forms a right-handed helical filament on oriC DNA; dsDNA binds to the exterior of the filament while single-stranded (ss)DNA is stabiized in the filament's interior. The ATP-DnaA-oriC complex binds and stabilizes one strand of the AT-rich DNA unwinding element (DUE), permitting loading of DNA polymerase. After initiation quickly degrades to an ADP-DnaA complex that is not apt for DNA replication. Binds acidic phospholipids. Its function is as follows. Non-cooperatively binds DnaA boxes in the minimal plasmid RK2 replication origin (oriV). In vitro in the presence of plasmid RK2-derived TrfA and E.coli protein HU, forms an open complex at oriV. This complex was not however competent for formation of a pre-priming complex with E.coli DnaB and DnaC. Broad host range plasmid RK2 requires not only DnaA for replication but also TrfA and host factors. The polypeptide is Chromosomal replication initiator protein DnaA (Pseudomonas putida (strain ATCC 47054 / DSM 6125 / CFBP 8728 / NCIMB 11950 / KT2440)).